The sequence spans 435 residues: Nuclear distribution protein nudF 2 (435 aa).

The LisH domain occupies 9–41 (QAEELHKSIIAYLSANGLPETTAILRKELGVTE). 8 WD repeats span residues 86–125 (SHRD…LEVT), 128–171 (GHTR…KNIR), 175–214 (GHDH…CVKT), 217–256 (GHTG…ENKL), 280–320 (APLA…LMTL), 322–361 (GHDN…KCVK), 366–396 (THGG…VRQI), and 397–434 (PDVA…QIFA).

This sequence belongs to the WD repeat LIS1/nudF family. As to quaternary structure, self-associates. Interacts with nudE and dynein.

It localises to the cytoplasm. It is found in the cytoskeleton. The protein resides in the spindle pole. Functionally, positively regulates the activity of the minus-end directed microtubule motor protein dynein. May enhance dynein-mediated microtubule sliding by targeting dynein to the microtubule plus end. Required for nuclear migration during vegetative growth as well as development. Required for retrograde early endosome (EE) transport from the hyphal tip. Required for localization of dynein to the mitotic spindle poles. Recruits additional proteins to the dynein complex at SPBs. This chain is Nuclear distribution protein nudF 2, found in Aspergillus clavatus (strain ATCC 1007 / CBS 513.65 / DSM 816 / NCTC 3887 / NRRL 1 / QM 1276 / 107).